A 436-amino-acid polypeptide reads, in one-letter code: [Pyruvate dehydrogenase (acetyl-transferring)] kinase isozyme 1, mitochondrial (436 aa).

Residues 1–28 constitute a mitochondrion transit peptide; it reads MRLARLLRGAALAGPGPGLRAAGFSRSF. Phosphotyrosine; by FGFR1 is present on Tyr136. The Histidine kinase domain maps to 163–393; that stretch reads YKESFGVDPV…DAVIYIKALS (231 aa). Phosphotyrosine; by FGFR1, ABL1, FLT3 and JAK2 is present on Tyr243. Tyr244 carries the phosphotyrosine; by FGFR1 modification. ATP-binding positions include 279–286, Asp318, 337–338, and 354–359; these read ELFKNAMR, ST, and GFGYGL. Position 338 is a phosphothreonine (Thr338). Lys405 is subject to N6-succinyllysine.

Belongs to the PDK/BCKDK protein kinase family. As to quaternary structure, homodimer, and heterodimer with PDK2. Interacts with the pyruvate dehydrogenase complex subunit DLAT, and is part of the multimeric pyruvate dehydrogenase complex that contains multiple copies of pyruvate dehydrogenase (E1), dihydrolipoamide acetyltransferase (DLAT, E2) and lipoamide dehydrogenase (DLD, E3). Interacts with phosphoglycerate kinase PGK1; the interaction is direct, occurs under hypoxic conditions and leads to PDK1-mediated inhibition of pyruvate dehydrogenase complex activity. In terms of processing, phosphorylated by constitutively activated ABL1, FGFR1, FLT3 and JAK2 (in vitro), and this may also occur in cancer cells that express constitutively activated ABL1, FGFR1, FLT3 and JAK2. Phosphorylation at Tyr-243 and Tyr-244 strongly increases kinase activity, while phosphorylation at Tyr-136 has a lesser effect. Phosphorylated under hypoxic conditions at Thr-338 by phosphoglycerate kinase PGK1 which has an activating effect. In terms of tissue distribution, expressed predominantly in the heart. Detected at lower levels in liver, skeletal muscle and pancreas.

It is found in the mitochondrion matrix. It carries out the reaction L-seryl-[pyruvate dehydrogenase E1 alpha subunit] + ATP = O-phospho-L-seryl-[pyruvate dehydrogenase E1 alpha subunit] + ADP + H(+). Its activity is regulated as follows. Activity is enhanced by binding to the pyruvate dehydrogenase subunit DLAT. Inhibited by AZD7545; this compound interferes with DLAT binding and thereby inhibits kinase activity. Inhibited by dichloroacetate and radicicol. Activated under hypoxic conditions by phosphoglycerate kinase PGK1-mediated phosphorylation at Thr-338. Kinase that plays a key role in regulation of glucose and fatty acid metabolism and homeostasis via phosphorylation of the pyruvate dehydrogenase subunits PDHA1 and PDHA2. This inhibits pyruvate dehydrogenase activity, and thereby regulates metabolite flux through the tricarboxylic acid cycle, down-regulates aerobic respiration and inhibits the formation of acetyl-coenzyme A from pyruvate. Plays an important role in cellular responses to hypoxia and is important for cell proliferation under hypoxia. The sequence is that of [Pyruvate dehydrogenase (acetyl-transferring)] kinase isozyme 1, mitochondrial (PDK1) from Homo sapiens (Human).